We begin with the raw amino-acid sequence, 530 residues long: Glucocorticoid modulatory element-binding protein 2 (530 aa).

Residues 81 to 163 (EEGENLEAEI…RKIMDSGELD (83 aa)) form the SAND domain. Residue Cys-110 coordinates Zn(2+). Lys-136, Lys-140, Lys-143, and Arg-154 together coordinate DNA. A Glycyl lysine isopeptide (Lys-Gly) (interchain with G-Cter in SUMO1); alternate cross-link involves residue Lys-155. Lys-155 is covalently cross-linked (Glycyl lysine isopeptide (Lys-Gly) (interchain with G-Cter in SUMO2); alternate). Positions 167, 171, and 175 each coordinate Zn(2+). The stretch at 304–348 (QMDRSREQYARDLAALEQQCDEHRRRAKELKHKSQHLSNVLMTLT) forms a coiled coil. Ser-373 is modified (phosphoserine).

Homodimer, and heterodimer of GMEB1 and GMEB2. GMEB1 and GMEB2 form the parvovirus initiator complex (PIF). Interacts with the glucocorticoid receptor (NR3C1). May interact with CREB-binding protein (CBP). Expressed in peripheral blood lymphocytes and fetal liver. Expressed preferentially in reproductive and/or developmentally important cells, such as testis, placenta, bone marrow and fetal tissues.

It localises to the nucleus. It is found in the cytoplasm. In terms of biological role, trans-acting factor that binds to glucocorticoid modulatory elements (GME) present in the TAT (tyrosine aminotransferase) promoter and increases sensitivity to low concentrations of glucocorticoids. Also binds to the transferrin receptor promoter. Essential auxiliary factor for the replication of parvoviruses. The polypeptide is Glucocorticoid modulatory element-binding protein 2 (GMEB2) (Homo sapiens (Human)).